The following is a 1272-amino-acid chain: Ubiquitin carboxyl-terminal hydrolase 2 (1272 aa).

Positions 736–1258 constitute a USP domain; that stretch reads TGINNIGNTC…TPYFLVYVKQ (523 aa). Residue Cys745 is the Nucleophile of the active site. The segment at 884–918 is disordered; that stretch reads DGLNGDVGTDANRKKNESNDAEVSENEDTTGLTSP. Over residues 902 to 911 the composition is skewed to acidic residues; the sequence is NDAEVSENED. Residue Ser907 is modified to Phosphoserine. Residue His1209 is the Proton acceptor of the active site.

This sequence belongs to the peptidase C19 family. In terms of assembly, forms a ternary complex with RSP5 and RUP1. Interacts with RSP5. Interacts with FZO1.

The catalysed reaction is Thiol-dependent hydrolysis of ester, thioester, amide, peptide and isopeptide bonds formed by the C-terminal Gly of ubiquitin (a 76-residue protein attached to proteins as an intracellular targeting signal).. Its function is as follows. Has an ATP-independent isopeptidase activity, cleaving at the C-terminus of the ubiquitin moiety in natural or engineered linear fusion proteins, irrespective of their size or the presence of an N-terminal extension to ubiquitin. Hydrolyzes polyubiquitinated 'Lys-63' polyubiquitin chains in RPO21, producing mono-ubiquitinated RNA polymerase II. Removes ubiquitin chains that initiate proteolysis of FZO1 and inhibit mitochondrial fusion. This chain is Ubiquitin carboxyl-terminal hydrolase 2 (UBP2), found in Saccharomyces cerevisiae (strain ATCC 204508 / S288c) (Baker's yeast).